The primary structure comprises 327 residues: Putative HTH-type transcriptional regulatory protein Mevan_1514 (327 aa).

An HTH cro/C1-type domain is found at 128 to 189; the sequence is LKETREKLNI…IKGINITDYF (62 aa). A DNA-binding region (H-T-H motif) is located at residues 139-158; it reads VGELAEFSRVSRKTIYKYEQ.

This is Putative HTH-type transcriptional regulatory protein Mevan_1514 from Methanococcus vannielii (strain ATCC 35089 / DSM 1224 / JCM 13029 / OCM 148 / SB).